The primary structure comprises 496 residues: Lysine--tRNA ligase (496 aa).

Glutamate 408 and glutamate 415 together coordinate Mg(2+).

Belongs to the class-II aminoacyl-tRNA synthetase family. Homodimer. Mg(2+) serves as cofactor.

It localises to the cytoplasm. It carries out the reaction tRNA(Lys) + L-lysine + ATP = L-lysyl-tRNA(Lys) + AMP + diphosphate. The chain is Lysine--tRNA ligase from Legionella pneumophila (strain Paris).